A 398-amino-acid chain; its full sequence is MNELPRLPFDNPAILGIAPQMRALQKEGPIVRVRTAGEDAWLITRYDEVKALLSDRRLGLSDPKPERAAKSTARITMMALMAGDDYDREATEHPQMRELLVPRFSTRRMRVMKARIEQHVDELLDQLAASVAPVDLHRALSFPLPTMVVCDLLGVPLADRERIGQWARGTFDQSDSLHSVNTFQQVVDYMMELVQRKRTEPGDDILSELIAEKDGTLSDEYIAHLGCAVLLFGYETTIVRIDMGVLLMLRNPAQRALLAENPALAPAAVEEILRLAVGGKGSNALIPRYAHSDITVGETVIRTGDAVMLAIGAANIDGHAFPHADLFDLSREKPKAHMAFGHGTRHCIGRVLARIELTAVFERLFRRLPNLQLAVPEESLRWQEHRITGGFDEIPVTF.

Position 347 (Cys-347) interacts with heme.

This sequence belongs to the cytochrome P450 family. The cofactor is heme.

The enzyme catalyses pentalenolactone F + 2 reduced [2Fe-2S]-[ferredoxin] + O2 + 2 H(+) = pentalenolactone + 2 oxidized [2Fe-2S]-[ferredoxin] + 2 H2O. It participates in antibiotic biosynthesis; pentalenolactone biosynthesis. Catalyzes the final step in the biosynthesis of the sesquiterpenoid antibiotic pentalenolactone by mediating the oxidative rearrangement of pentalenolactone F to pentalenolactone. This Streptomyces exfoliatus (Streptomyces hydrogenans) protein is Pentalenolactone synthase (penM).